The chain runs to 156 residues: ATP synthase subunit b (156 aa).

The helical transmembrane segment at 11–31 (AIAFILFVAFCMKYVWPPLMA) threads the bilayer.

The protein belongs to the ATPase B chain family. As to quaternary structure, F-type ATPases have 2 components, F(1) - the catalytic core - and F(0) - the membrane proton channel. F(1) has five subunits: alpha(3), beta(3), gamma(1), delta(1), epsilon(1). F(0) has three main subunits: a(1), b(2) and c(10-14). The alpha and beta chains form an alternating ring which encloses part of the gamma chain. F(1) is attached to F(0) by a central stalk formed by the gamma and epsilon chains, while a peripheral stalk is formed by the delta and b chains.

The protein resides in the cell inner membrane. Functionally, f(1)F(0) ATP synthase produces ATP from ADP in the presence of a proton or sodium gradient. F-type ATPases consist of two structural domains, F(1) containing the extramembraneous catalytic core and F(0) containing the membrane proton channel, linked together by a central stalk and a peripheral stalk. During catalysis, ATP synthesis in the catalytic domain of F(1) is coupled via a rotary mechanism of the central stalk subunits to proton translocation. In terms of biological role, component of the F(0) channel, it forms part of the peripheral stalk, linking F(1) to F(0). This chain is ATP synthase subunit b, found in Erwinia tasmaniensis (strain DSM 17950 / CFBP 7177 / CIP 109463 / NCPPB 4357 / Et1/99).